The sequence spans 309 residues: Tagatose-6-phosphate kinase (309 aa).

Belongs to the carbohydrate kinase PfkB family. LacC subfamily.

The enzyme catalyses D-tagatofuranose 6-phosphate + ATP = D-tagatofuranose 1,6-bisphosphate + ADP + H(+). Its pathway is carbohydrate metabolism; D-tagatose 6-phosphate degradation; D-glyceraldehyde 3-phosphate and glycerone phosphate from D-tagatose 6-phosphate: step 1/2. This is Tagatose-6-phosphate kinase from Streptococcus pneumoniae serotype 4 (strain ATCC BAA-334 / TIGR4).